A 132-amino-acid polypeptide reads, in one-letter code: 3'-dehydrocarminate deglycosidase beta subunit (132 aa).

Belongs to the C-glycoside deglycosidase beta subunit family. In terms of assembly, heterodimer composed of an alpha subunit (CarB) and a beta subunit (CarC). It depends on Mg(2+) as a cofactor.

The enzyme catalyses 3'-dehydrocarminate + H(+) = kermesate + 1,5-anhydro-D-erythro-hex-1-en-3-ulose. Activity is strongly reduced in the presence of chelating agents. In terms of biological role, carbon-carbon bond-cleaving enzyme which participates in a carminate degradation pathway. Cleaves the C-C bond in 3'-dehydrocarminate to form kermesate. Also shows weak activity with other C-glycosides, such as 3''-dehydropuerarin (3''-oxo-puerarin), 3''-dehydroisoorientin (3''-oxo-homoorientin) and 3'-dehydromangiferin (3'-oxo-mangiferin). The chain is 3'-dehydrocarminate deglycosidase beta subunit from Microbacterium sp.